Consider the following 352-residue polypeptide: Zinc finger protein 185 (352 aa).

Disordered stretches follow at residues 1–73 and 86–121; these read MTTE…ELQS and DVLPEKNQEPPALARPDSGLSSSTTEKIAHRQITPP. Serine 18 bears the Phosphoserine mark. Polar residues predominate over residues 61-72; it reads KKTTSSPTQELQ. Threonine 137 is modified (phosphothreonine). The span at 251–268 shows a compositional bias: polar residues; it reads VSSGKPVSSHCDSPSSIE. Residues 251 to 287 are disordered; it reads VSSGKPVSSHCDSPSSIEDSLDLAKKPPHEGTPSERP. Residues 272-287 show a composition bias toward basic and acidic residues; it reads DLAKKPPHEGTPSERP. An LIM zinc-binding domain is found at 292–347; it reads CTYCSHEIQDCPKITLEHLGICCHEYCFKCGICNKPMGDLLDQIFIHRDTIHCGKC.

Expressed in skin, kidney, ovary, testis. Also expressed in brain, cartilage, heart, lung, spleen and thymus.

It is found in the cytoplasm. The protein resides in the cytoskeleton. The protein localises to the cell junction. It localises to the focal adhesion. Its function is as follows. May be involved in the regulation of cellular proliferation and/or differentiation. The polypeptide is Zinc finger protein 185 (Znf185) (Mus musculus (Mouse)).